Consider the following 262-residue polypeptide: MDFLNDDELDLDLPVTAEISKELFATEIEKYRESETNGTDVDNFDVDRFLVQKNFHYLPLDSLIRDLSGLSQKMVQTLLEQIRSNYDDYLTFSNTYTDEENETLINLEKTQSDLQKFMTQLDHLIKDDISNTQEIIKDVLEYLKKLDEIYGSLRNHSQLTEALSLGKRLSKSLHEMCGIEPLEEEICSGLIEQLYKLITASRRILESCADSNSPYIHHLRNDYQDLLQEFQISLKILTEKCLENPSSLQNLSLTLVSIIKTA.

In terms of assembly, component of the conserved oligomeric Golgi (COG or Sec34/Sec35) complex which consists of eight different proteins COG1-COG8. The COG complex interacts with the Rab GTPase YPT1, the Glogi SNAREs GOS1, SEC22, SED5, VTI1 and YKT6 and the COPI coatomer subunit gamma SEC21.

The protein resides in the golgi apparatus membrane. Its function is as follows. Acts as a component of the peripheral membrane COG complex that is involved in intra-Golgi protein trafficking. COG is located at the cis-Golgi, and regulates tethering of retrograde intra-Golgi vesicles and possibly a number of other membrane trafficking events. COG2 is required for ER to Golgi vesicle docking. Not essential for viability. The protein is Conserved oligomeric Golgi complex subunit 2 (COG2) of Saccharomyces cerevisiae (strain ATCC 204508 / S288c) (Baker's yeast).